Here is a 300-residue protein sequence, read N- to C-terminus: Transcription elongation factor A protein 2 (300 aa).

One can recognise a TFIIS N-terminal domain in the interval glutamate 6–serine 83. A Glycyl lysine isopeptide (Lys-Gly) (interchain with G-Cter in ubiquitin) cross-link involves residue lysine 58. 2 positions are modified to phosphoserine: serine 60 and serine 101. The disordered stretch occupies residues aspartate 84–proline 131. The span at glutamate 103–leucine 117 shows a compositional bias: basic and acidic residues. Residues valine 139–threonine 255 enclose the TFIIS central domain. Residues aspartate 258–lysine 298 form a TFIIS-type zinc finger. The Zn(2+) site is built by cysteine 262, cysteine 265, cysteine 290, and cysteine 293.

Belongs to the TFS-II family. Interacts with the basal transcription factor GTF2B. Interacts with REXO1.

It localises to the nucleus. Necessary for efficient RNA polymerase II transcription elongation past template-encoded arresting sites. The arresting sites in DNA have the property of trapping a certain fraction of elongating RNA polymerases that pass through, resulting in locked ternary complexes. Cleavage of the nascent transcript by S-II allows the resumption of elongation from the new 3'-terminus. The chain is Transcription elongation factor A protein 2 (TCEA2) from Bos taurus (Bovine).